The sequence spans 792 residues: Kinesin-like protein KIFC2 (792 aa).

Disordered regions lie at residues 22-45 and 142-184; these read AAAV…RRRP and QGTQ…QEHQ. Residues 142–169 show a composition bias toward polar residues; the sequence is QGTQPTCPVQPSTLDGSLSQEESSSQPT. A coiled-coil region spans residues 186-347; that stretch reads LQLEEEQRVW…ARMASLRQGC (162 aa). The 324-residue stretch at 409–732 folds into the Kinesin motor domain; that stretch reads NIRVLCRLRP…LKFAERVGQV (324 aa). 486–493 contributes to the ATP binding site; the sequence is GQTGTGKT. Residues 734–792 are disordered; that stretch reads LGPARRRRAPRSGTPSSLSTDTPLTGTSCTPTPSPGSPPSTSPNSCSGLTLEPPGDPPP. Low complexity predominate over residues 744–764; the sequence is RSGTPSSLSTDTPLTGTSCTP. A compositionally biased stretch (pro residues) spans 765–774; it reads TPSPGSPPST.

Belongs to the TRAFAC class myosin-kinesin ATPase superfamily. Kinesin family. As to expression, present in axons and dendrites of neurons in the central and peripheral nervous systems.

Its subcellular location is the cytoplasm. It localises to the cytoskeleton. May play a role in microtubule-dependent retrograde axonal transport. May function as the motor for the transport of multivesicular body (MVB)-like organelles in dendrites. This is Kinesin-like protein KIFC2 (Kifc2) from Mus musculus (Mouse).